The chain runs to 190 residues: Guanylate kinase (190 aa).

The 181-residue stretch at 8–188 (GRLVILAGPS…AVSAIKAVLL (181 aa)) folds into the Guanylate kinase-like domain. 15–22 (GPSAVGKS) provides a ligand contact to ATP.

This sequence belongs to the guanylate kinase family.

The protein resides in the cytoplasm. The catalysed reaction is GMP + ATP = GDP + ADP. Essential for recycling GMP and indirectly, cGMP. The polypeptide is Guanylate kinase (Corynebacterium efficiens (strain DSM 44549 / YS-314 / AJ 12310 / JCM 11189 / NBRC 100395)).